The sequence spans 273 residues: Protein FAM210A (273 aa).

Positions 97-106 (SSSATSSGPP) are enriched in low complexity. Residues 97–116 (SSSATSSGPPSEKKEDPDPL) are disordered. The span at 107 to 116 (SEKKEDPDPL) shows a compositional bias: basic and acidic residues. One can recognise a DUF1279 domain in the interval 118–230 (DRSISLYQRF…GYMSTPPPVK (113 aa)). Residues 137 to 157 (VLIPVHLITSAVWFGTFYYAA) traverse the membrane as a helical segment. Positions 230–269 (KEYLQDKMEETKELLTEKMEETKDRLTEKLQETKGKVSLK) form a coiled coil. The tract at residues 247–273 (KMEETKDRLTEKLQETKGKVSLKKKVE) is disordered.

This sequence belongs to the FAM210 family. Interacts with ATAD3A.

The protein localises to the membrane. It localises to the mitochondrion. Its subcellular location is the cytoplasm. Functionally, may play a role in the structure and strength of both muscle and bone. In Bos taurus (Bovine), this protein is Protein FAM210A (FAM210A).